Consider the following 79-residue polypeptide: Small ribosomal subunit protein uS17 (79 aa).

The protein belongs to the universal ribosomal protein uS17 family. As to quaternary structure, part of the 30S ribosomal subunit.

Its function is as follows. One of the primary rRNA binding proteins, it binds specifically to the 5'-end of 16S ribosomal RNA. The chain is Small ribosomal subunit protein uS17 from Rhizobium johnstonii (strain DSM 114642 / LMG 32736 / 3841) (Rhizobium leguminosarum bv. viciae).